The chain runs to 255 residues: Glutamate racemase (255 aa).

Substrate-binding positions include 7-8 and 39-40; these read DS and YG. Cys70 (proton donor/acceptor) is an active-site residue. 71 to 72 provides a ligand contact to substrate; that stretch reads NT. Cys181 (proton donor/acceptor) is an active-site residue. Substrate is bound at residue 182–183; it reads TH.

The protein belongs to the aspartate/glutamate racemases family.

It catalyses the reaction L-glutamate = D-glutamate. It functions in the pathway cell wall biogenesis; peptidoglycan biosynthesis. In terms of biological role, provides the (R)-glutamate required for cell wall biosynthesis. This is Glutamate racemase from Helicobacter pylori (strain P12).